We begin with the raw amino-acid sequence, 169 residues long: MTDNFLSNSSQKQGRLSAWLTIHRLSHRPLGFDYQGVEIVEVRPEDWPSVAVSLYVYGFNYLRLQCGYDVFPGGPLASIYYLTKVQDGADQPEEVCIKIFVSRDNPKIPSAFWIWKSADFQERESYDMLGIIYESHPHLKRILMPESWLGWPLRKDYITPDFFELQDAY.

This sequence belongs to the complex I 30 kDa subunit family. NDH is composed of at least 16 different subunits, 5 of which are encoded in the nucleus.

Its subcellular location is the plastid. The protein localises to the chloroplast thylakoid membrane. The catalysed reaction is a plastoquinone + NADH + (n+1) H(+)(in) = a plastoquinol + NAD(+) + n H(+)(out). It catalyses the reaction a plastoquinone + NADPH + (n+1) H(+)(in) = a plastoquinol + NADP(+) + n H(+)(out). Its function is as follows. NDH shuttles electrons from NAD(P)H:plastoquinone, via FMN and iron-sulfur (Fe-S) centers, to quinones in the photosynthetic chain and possibly in a chloroplast respiratory chain. The immediate electron acceptor for the enzyme in this species is believed to be plastoquinone. Couples the redox reaction to proton translocation, and thus conserves the redox energy in a proton gradient. This Staurastrum punctulatum (Green alga) protein is NAD(P)H-quinone oxidoreductase subunit J, chloroplastic.